The following is a 510-amino-acid chain: Maturase K (510 aa).

This sequence belongs to the intron maturase 2 family. MatK subfamily.

The protein resides in the plastid. Usually encoded in the trnK tRNA gene intron. Probably assists in splicing its own and other chloroplast group II introns. The protein is Maturase K of Bartsia alpina (Velvet bells).